The primary structure comprises 347 residues: GMP reductase (347 aa).

108 to 131 (ADFEKTKQILDLNPALNFVCIDVA) provides a ligand contact to NADP(+). K(+)-binding residues include G181 and G183. The Thioimidate intermediate role is filled by C186. An NADP(+)-binding site is contributed by 216–239 (IVSDGGCTTPGDVAKAFGGGADFV).

It belongs to the IMPDH/GMPR family. GuaC type 1 subfamily. In terms of assembly, homotetramer.

It catalyses the reaction IMP + NH4(+) + NADP(+) = GMP + NADPH + 2 H(+). In terms of biological role, catalyzes the irreversible NADPH-dependent deamination of GMP to IMP. It functions in the conversion of nucleobase, nucleoside and nucleotide derivatives of G to A nucleotides, and in maintaining the intracellular balance of A and G nucleotides. This chain is GMP reductase, found in Escherichia coli O127:H6 (strain E2348/69 / EPEC).